Reading from the N-terminus, the 326-residue chain is ELMO domain-containing protein 1 (326 aa).

Positions 133 to 306 (QHEEMLLKLW…KFRKRIIKQL (174 aa)) constitute an ELMO domain.

In terms of biological role, acts as a GTPase-activating protein (GAP) toward guanine nucleotide exchange factors like ARL2, ARL3, ARF1 and ARF6, but not for GTPases outside the Arf family. This Pongo abelii (Sumatran orangutan) protein is ELMO domain-containing protein 1 (ELMOD1).